Here is a 205-residue protein sequence, read N- to C-terminus: High frequency lysogenization protein HflD homolog (205 aa).

Belongs to the HflD family.

The protein localises to the cytoplasm. Its subcellular location is the cell inner membrane. This chain is High frequency lysogenization protein HflD homolog, found in Shewanella sp. (strain MR-7).